The chain runs to 195 residues: U8 snoRNA-decapping enzyme (195 aa).

A Nudix hydrolase domain is found at 18 to 173 (DWRHACHALL…IGAAREQLLE (156 aa)). His24, Arg50, and Phe57 together coordinate substrate. Residues Gly59, Glu76, Glu80, and His99 each coordinate Mn(2+). The Nudix box motif lies at 61–82 (FVDAQDSCLEDGLNRELREELG). A substrate-binding site is contributed by Gln170. Position 173 (Glu173) interacts with Mn(2+).

The protein belongs to the Nudix hydrolase family. NUDT16 subfamily. In terms of assembly, homodimer. The cofactor is Mg(2+). Mn(2+) is required as a cofactor. Requires Co(2+) as cofactor. As to expression, expressed in brain, testis, spleen, lung, heart, liver, kidney and muscle (at protein level).

The protein resides in the nucleus. The protein localises to the nucleolus. It is found in the nucleoplasm. Its subcellular location is the cytoplasm. It carries out the reaction a 5'-end (N(7)-methyl 5'-triphosphoguanosine)-ribonucleoside in mRNA + H2O = N(7)-methyl-GDP + a 5'-end phospho-ribonucleoside in mRNA + 2 H(+). The enzyme catalyses IDP + H2O = IMP + phosphate + H(+). The catalysed reaction is dIDP + H2O = dIMP + phosphate + H(+). It catalyses the reaction a 5'-end NAD(+)-phospho-ribonucleoside in mRNA + H2O = a 5'-end phospho-ribonucleoside in mRNA + NAD(+) + H(+). It carries out the reaction a 5'-end FAD-phospho-ribonucleoside in mRNA + H2O = a 5'-end phospho-adenosine-phospho-ribonucleoside in mRNA + FMN + 2 H(+). The enzyme catalyses a 5'-end CoA-ribonucleoside in mRNA + H2O = a 5'-end phospho-adenosine-phospho-ribonucleoside in mRNA + (R)-4'-phosphopantetheine + 2 H(+). RNA-binding and decapping enzyme that catalyzes the cleavage of the cap structure of snoRNAs and mRNAs in a metal-dependent manner. Part of the U8 snoRNP complex that is required for the accumulation of mature 5.8S and 28S rRNA. Has diphosphatase activity and removes m7G and/or m227G caps from U8 snoRNA and leaves a 5'monophosphate on the RNA. Also catalyzes the cleavage of the cap structure on mRNAs. Does not hydrolyze cap analog structures like 7-methylguanosine nucleoside triphosphate (m7GpppG). Also hydrolysis m7G- and m227G U3-capped RNAs but with less efficiencies. Has broad substrate specificity with manganese or cobalt as cofactor and can act on various RNA species. Binds to the U8 snoRNA; metal is not required for RNA-binding. May play a role in the regulation of snoRNAs and mRNAs degradation. Also acts as a phosphatase; hydrolyzes the non-canonical purine nucleotides inosine diphosphate (IDP) and deoxyinosine diphosphate (dITP) as well as guanosine diphosphate (GDP), deoxyguanosine diphosphate (dGDP), xanthine diphosphate (XDP), inosine triphosphate (ITP) and deoxyinosine triphosphate (ITP) to their respective monophosphate derivatives and does not distinguish between the deoxy- and ribose forms. The order of activity with different substrates is IDP &gt; dIDP &gt;&gt; GDP = dGDP &gt; XDP = ITP = dITP. Binds strongly to GTP, ITP and XTP. Participates in the hydrolysis of dIDP/IDP and probably excludes non-canonical purines from RNA and DNA precursor pools, thus preventing their incorporation into RNA and DNA and avoiding chromosomal lesions. Exhibits decapping activity towards NAD-capped RNAs and FAD-capped RNAs. Exhibits decapping activity towards dpCoA-capped RNAs in vitro. The protein is U8 snoRNA-decapping enzyme (Nudt16) of Mus musculus (Mouse).